The primary structure comprises 113 residues: Cytochrome c (113 aa).

C21, C24, H25, and M90 together coordinate heme c.

It belongs to the cytochrome c family. In terms of processing, binds 1 heme c group covalently per subunit.

The protein localises to the mitochondrion intermembrane space. Electron carrier protein. The oxidized form of the cytochrome c heme group can accept an electron from the heme group of the cytochrome c1 subunit of cytochrome reductase. Cytochrome c then transfers this electron to the cytochrome oxidase complex, the final protein carrier in the mitochondrial electron-transport chain. The sequence is that of Cytochrome c (cytC) from Dictyostelium discoideum (Social amoeba).